We begin with the raw amino-acid sequence, 67 residues long: Penaeidin-4a (67 aa).

The N-terminal stretch at 1 to 19 is a signal peptide; that stretch reads MRLVVCLVFLASFALVCQG. Intrachain disulfides connect Cys-42–Cys-56, Cys-45–Cys-63, and Cys-57–Cys-64. Arg-66 carries the arginine amide modification.

The protein belongs to the penaeidin family.

The protein resides in the cytoplasmic granule. Antibacterial and antifungal activity. Presents chitin-binding activity. The sequence is that of Penaeidin-4a from Penaeus vannamei (Whiteleg shrimp).